The sequence spans 527 residues: Organic cation/carnitine transporter 2 (527 aa).

Residues 1 to 27 (MAEPTQPLLTDSNSSSPRSLDDTIESY) are Cytoplasmic-facing. A helical membrane pass occupies residues 28 to 48 (IGSFGWAQFLQAALVSFSGVF). Topologically, residues 49–119 (DAQQTFISVF…SFVKGLPESS (71 aa)) are extracellular. A helical transmembrane segment spans residues 120 to 140 (FFVGCLIGGLVLSTLADSSLG). At 141–149 (RKNMLFLSC) the chain is on the cytoplasmic side. A helical transmembrane segment spans residues 150-170 (LVMAISTMLTVFSPNIWVYAV). Residues 171-176 (LRFVNG) lie on the Extracellular side of the membrane. The chain crosses the membrane as a helical span at residues 177–195 (FGRATIGTCALVLSTELVG). Residue 190–197 (STELVGKK) coordinates ATP. Residues 196 to 201 (KKWRGR) lie on the Cytoplasmic side of the membrane. Residues 202-222 (VGIMSFFGFMLGFLSLPLMAY) traverse the membrane as a helical segment. Residues 223 to 230 (MNRGSSWR) are Extracellular-facing. Residues 231–251 (ILYAWTSIPTIIYCVLVRFFV) traverse the membrane as a helical segment. The Cytoplasmic portion of the chain corresponds to 252-326 (CESPRWLFVR…LVEKRWALKR (75 aa)). A helical membrane pass occupies residues 327-347 (LSAVMAIAFGIGLVYYGMPLA). The Extracellular segment spans residues 348–356 (LSNLDFNIY). The chain crosses the membrane as a helical span at residues 357 to 377 (LSAAFNALMDLPANLITLFLV). The Cytoplasmic portion of the chain corresponds to 378-385 (DKLSRRNA). A helical membrane pass occupies residues 386-406 (LIGFTALGGVSSVLIFALHNM). The Extracellular portion of the chain corresponds to 407–415 (RIGNHGALQ). Residues 416–436 (LALELISYFSACSAFNMEMIY) traverse the membrane as a helical segment. Residues 437 to 448 (TIELFPTCVRNS) are Cytoplasmic-facing. Residues 449–469 (AIAMARQALVLGGVFSPIMVA) traverse the membrane as a helical segment. The Extracellular portion of the chain corresponds to 470–475 (AGRKNA). A helical membrane pass occupies residues 476 to 496 (FWSFGLFGLAIGLLGLFAVGL). Topologically, residues 497–527 (PETRGSDLCDTMDEEECKDRRSKVAVNNVIA) are cytoplasmic.

The protein belongs to the major facilitator (TC 2.A.1) superfamily. Organic cation transporter (TC 2.A.1.19) family. As to expression, weakly expressed in roots, including tips and initiation site of lateral roots, siliques and flowers, especially in pollen and stigma.

The protein localises to the vacuole membrane. Its function is as follows. High affinity carnitine transporter involved in the active cellular uptake of carnitine. Also transports organic cations. This is Organic cation/carnitine transporter 2 (OCT2) from Arabidopsis thaliana (Mouse-ear cress).